Consider the following 161-residue polypeptide: ATP synthase subunit b 1 (161 aa).

The chain crosses the membrane as a helical span at residues proline 5–valine 25.

It belongs to the ATPase B chain family. In terms of assembly, F-type ATPases have 2 components, F(1) - the catalytic core - and F(0) - the membrane proton channel. F(1) has five subunits: alpha(3), beta(3), gamma(1), delta(1), epsilon(1). F(0) has three main subunits: a(1), b(2) and c(10-14). The alpha and beta chains form an alternating ring which encloses part of the gamma chain. F(1) is attached to F(0) by a central stalk formed by the gamma and epsilon chains, while a peripheral stalk is formed by the delta and b chains.

It localises to the cell inner membrane. In terms of biological role, f(1)F(0) ATP synthase produces ATP from ADP in the presence of a proton or sodium gradient. F-type ATPases consist of two structural domains, F(1) containing the extramembraneous catalytic core and F(0) containing the membrane proton channel, linked together by a central stalk and a peripheral stalk. During catalysis, ATP synthesis in the catalytic domain of F(1) is coupled via a rotary mechanism of the central stalk subunits to proton translocation. Its function is as follows. Component of the F(0) channel, it forms part of the peripheral stalk, linking F(1) to F(0). The chain is ATP synthase subunit b 1 from Nitrobacter winogradskyi (strain ATCC 25391 / DSM 10237 / CIP 104748 / NCIMB 11846 / Nb-255).